The sequence spans 242 residues: Probable 2-phosphosulfolactate phosphatase (242 aa).

It belongs to the ComB family. It depends on Mg(2+) as a cofactor.

It carries out the reaction (2R)-O-phospho-3-sulfolactate + H2O = (2R)-3-sulfolactate + phosphate. The sequence is that of Probable 2-phosphosulfolactate phosphatase from Parasynechococcus marenigrum (strain WH8102).